The chain runs to 329 residues: Cytosolic Fe-S cluster assembly factor NBP35 (329 aa).

A disordered region spans residues 1–33 (MAPSQVEDISKTELETPEHCPGPESEQAGKEDA). Positions 8-18 (DISKTELETPE) are enriched in basic and acidic residues. [4Fe-4S] cluster-binding residues include Cys-20, Cys-34, Cys-37, and Cys-43. 74-81 (GKGGVGKS) contacts ATP. Residues Cys-248 and Cys-251 each contribute to the [4Fe-4S] cluster site.

It belongs to the Mrp/NBP35 ATP-binding proteins family. NUBP1/NBP35 subfamily. As to quaternary structure, heterotetramer of 2 NBP35 and 2 CFD1 chains. Requires [4Fe-4S] cluster as cofactor.

The protein localises to the cytoplasm. It localises to the nucleus. In terms of biological role, component of the cytosolic iron-sulfur (Fe/S) protein assembly (CIA) machinery. Required for maturation of extramitochondrial Fe-S proteins. The NBP35-CFD1 heterotetramer forms a Fe-S scaffold complex, mediating the de novo assembly of an Fe-S cluster and its transfer to target apoproteins. Required for biogenesis and export of both ribosomal subunits, which may reflect a role in assembly of the Fe/S clusters in RLI1, a protein which performs rRNA processing and ribosome export. The sequence is that of Cytosolic Fe-S cluster assembly factor NBP35 from Debaryomyces hansenii (strain ATCC 36239 / CBS 767 / BCRC 21394 / JCM 1990 / NBRC 0083 / IGC 2968) (Yeast).